Here is a 78-residue protein sequence, read N- to C-terminus: MAQQRRGGRRRRKVDFIAANHIDYIDYKDVDLLKRFISERGKILPRRVTGTSAKNQRKLTVAIKRARVMGLLPFVAED.

This sequence belongs to the bacterial ribosomal protein bS18 family. Part of the 30S ribosomal subunit. Forms a tight heterodimer with protein bS6.

Its function is as follows. Binds as a heterodimer with protein bS6 to the central domain of the 16S rRNA, where it helps stabilize the platform of the 30S subunit. The polypeptide is Small ribosomal subunit protein bS18 (Lactobacillus johnsonii (strain CNCM I-12250 / La1 / NCC 533)).